A 273-amino-acid polypeptide reads, in one-letter code: 4-hydroxy-tetrahydrodipicolinate reductase (273 aa).

Residues 12–17 (GAGGRM) and Glu38 contribute to the NAD(+) site. Arg39 is a binding site for NADP(+). NAD(+)-binding positions include 102–104 (GTT) and 126–129 (AANF). His159 functions as the Proton donor/acceptor in the catalytic mechanism. His160 lines the (S)-2,3,4,5-tetrahydrodipicolinate pocket. Catalysis depends on Lys163, which acts as the Proton donor. 169–170 (GT) contacts (S)-2,3,4,5-tetrahydrodipicolinate.

It belongs to the DapB family. In terms of assembly, homotetramer.

The protein localises to the cytoplasm. It carries out the reaction (S)-2,3,4,5-tetrahydrodipicolinate + NAD(+) + H2O = (2S,4S)-4-hydroxy-2,3,4,5-tetrahydrodipicolinate + NADH + H(+). The catalysed reaction is (S)-2,3,4,5-tetrahydrodipicolinate + NADP(+) + H2O = (2S,4S)-4-hydroxy-2,3,4,5-tetrahydrodipicolinate + NADPH + H(+). It participates in amino-acid biosynthesis; L-lysine biosynthesis via DAP pathway; (S)-tetrahydrodipicolinate from L-aspartate: step 4/4. Functionally, catalyzes the conversion of 4-hydroxy-tetrahydrodipicolinate (HTPA) to tetrahydrodipicolinate. This is 4-hydroxy-tetrahydrodipicolinate reductase from Klebsiella pneumoniae (strain 342).